A 64-amino-acid chain; its full sequence is Alpha-conotoxin CnIC (64 aa).

The first 21 residues, 1 to 21, serve as a signal peptide directing secretion; the sequence is MGMRMMFTVFLLVVLTTTVVS. Residues 22 to 47 constitute a propeptide that is removed on maturation; sequence FPSDSASDVRDDEAKDERSDMYKSKR. Asn-48 bears the Deamidated asparagine; in CnIH; partial mark. Intrachain disulfides connect Cys-51/Cys-56 and Cys-52/Cys-62. Cys-62 carries the cysteine amide modification.

The protein belongs to the conotoxin A superfamily. Expressed by the venom duct.

It localises to the secreted. Alpha-conotoxins act on postsynaptic membranes, they bind to the nicotinic acetylcholine receptors (nAChR) and thus inhibit them. This chain is Alpha-conotoxin CnIC, found in Conus consors (Singed cone).